We begin with the raw amino-acid sequence, 553 residues long: Dihydroxy-acid dehydratase (553 aa).

Aspartate 78 is a binding site for Mg(2+). A [2Fe-2S] cluster-binding site is contributed by cysteine 119. Mg(2+)-binding residues include aspartate 120 and lysine 121. Lysine 121 is modified (N6-carboxylysine). Residue cysteine 193 participates in [2Fe-2S] cluster binding. Glutamate 441 is a binding site for Mg(2+). Residue serine 467 is the Proton acceptor of the active site.

The protein belongs to the IlvD/Edd family. In terms of assembly, homodimer. It depends on [2Fe-2S] cluster as a cofactor. Requires Mg(2+) as cofactor.

The catalysed reaction is (2R)-2,3-dihydroxy-3-methylbutanoate = 3-methyl-2-oxobutanoate + H2O. The enzyme catalyses (2R,3R)-2,3-dihydroxy-3-methylpentanoate = (S)-3-methyl-2-oxopentanoate + H2O. The protein operates within amino-acid biosynthesis; L-isoleucine biosynthesis; L-isoleucine from 2-oxobutanoate: step 3/4. It participates in amino-acid biosynthesis; L-valine biosynthesis; L-valine from pyruvate: step 3/4. In terms of biological role, functions in the biosynthesis of branched-chain amino acids. Catalyzes the dehydration of (2R,3R)-2,3-dihydroxy-3-methylpentanoate (2,3-dihydroxy-3-methylvalerate) into 2-oxo-3-methylpentanoate (2-oxo-3-methylvalerate) and of (2R)-2,3-dihydroxy-3-methylbutanoate (2,3-dihydroxyisovalerate) into 2-oxo-3-methylbutanoate (2-oxoisovalerate), the penultimate precursor to L-isoleucine and L-valine, respectively. This Geotalea daltonii (strain DSM 22248 / JCM 15807 / FRC-32) (Geobacter daltonii) protein is Dihydroxy-acid dehydratase.